The sequence spans 167 residues: Telethonin (167 aa).

Phosphoserine is present on serine 39. A disordered region spans residues 144-167 (VPVSKPGALRRSLSRSMSQEAQRG). Residues 157–167 (SRSMSQEAQRG) are compositionally biased toward polar residues.

Interacts with MYOZ1, MYOZ2 and MYOZ3. Interacts with CSRP3. Interacts directly with the N-terminal Ig-like domains of 2 titin (TTN) molecules. Interacts with ANKRD2; the interaction is direct. Heart and skeletal muscle.

It is found in the cytoplasm. The protein localises to the myofibril. It localises to the sarcomere. Functionally, muscle assembly regulating factor. Mediates the antiparallel assembly of titin (TTN) molecules at the sarcomeric Z-disk. The sequence is that of Telethonin (TCAP) from Homo sapiens (Human).